A 217-amino-acid polypeptide reads, in one-letter code: Membrane-associated progesterone receptor component 2 (217 aa).

Residue serine 15 is glycosylated (O-linked (Xyl...) (chondroitin sulfate) serine). Residues 40–62 (ALLATGGEMLLNVALVALVLLGA) form a helical membrane-spanning segment. 3 positions are modified to phosphoserine: serine 84, serine 98, and serine 202. The 100-residue stretch at 96–195 (DFSLEQLRQY…EKYDYVGRLL (100 aa)) folds into the Cytochrome b5 heme-binding domain. Positions 196 to 217 (KPGEEPSEYTDEEDTKDHSKQD) are disordered. A compositionally biased stretch (acidic residues) spans 200-209 (EPSEYTDEED). At tyrosine 204 the chain carries Phosphotyrosine. Threonine 205 is subject to Phosphothreonine.

Belongs to the cytochrome b5 family. MAPR subfamily. In terms of assembly, interacts with PGRMC1. Interacts with AAAS.

Its subcellular location is the membrane. It localises to the nucleus envelope. It is found in the endoplasmic reticulum. The protein localises to the secreted. Functionally, required for the maintenance of uterine histoarchitecture and normal female reproductive lifespan. May serve as a universal non-classical progesterone receptor in the uterus. Intracellular heme chaperone required for delivery of labile, or signaling heme, to the nucleus. Plays a role in adipocyte function and systemic glucose homeostasis. In brown fat, which has a high demand for heme, delivery of labile heme in the nucleus regulates the activity of heme-responsive transcriptional repressors such as NR1D1 and BACH1. The polypeptide is Membrane-associated progesterone receptor component 2 (Rattus norvegicus (Rat)).